A 331-amino-acid polypeptide reads, in one-letter code: MKKSLIALTLAALPVAAMADVTLYGTIKAGVETSRSVAHNGAQAASVETGTGIVDLGSKIGFKGQEDLGNGLKAIWQVEQKASIAGTDSGWGNRQSFIGLKGGFGKLRVGRLNSVLKDTGDINPWDSKSDYLGVNKIAEPEARLISVRYDSPEFAGLSGSVQYALNDNAGRHNSESYHAGFNYKNGGFFVQYGGAYKRHHQVQENVNIEKYQIHRLVSGYDNDALYASVAVQQQDAKLVEENYSHNSQTEVAATLAYRFGNVTPRVSYAHGFKGSFDATNYNNDYDQVVVGAEYDFSKRTSALVSAGWLQEGKGESKFVSTAGGVGLRHKF.

Residues 1–19 form the signal peptide; that stretch reads MKKSLIALTLAALPVAAMA.

The protein belongs to the Gram-negative porin family. In terms of assembly, homotrimer.

It localises to the cell outer membrane. Serves as a slightly cation selective porin. The polypeptide is Major outer membrane protein P.IB (porB) (Neisseria meningitidis serogroup B).